We begin with the raw amino-acid sequence, 669 residues long: Elongation factor G 2 (669 aa).

The tr-type G domain occupies 1–276 (MGIRNIGIMA…SIVDYLPSPF (276 aa)). GTP-binding positions include 10-17 (AHIDAGKT), 74-78 (DTPGH), and 128-131 (NKMD).

The protein belongs to the TRAFAC class translation factor GTPase superfamily. Classic translation factor GTPase family. EF-G/EF-2 subfamily.

It localises to the cytoplasm. Functionally, catalyzes the GTP-dependent ribosomal translocation step during translation elongation. During this step, the ribosome changes from the pre-translocational (PRE) to the post-translocational (POST) state as the newly formed A-site-bound peptidyl-tRNA and P-site-bound deacylated tRNA move to the P and E sites, respectively. Catalyzes the coordinated movement of the two tRNA molecules, the mRNA and conformational changes in the ribosome. The polypeptide is Elongation factor G 2 (fusA2) (Borreliella afzelii (strain PKo) (Borrelia afzelii)).